Consider the following 316-residue polypeptide: Beta-agarase (316 aa).

The signal sequence occupies residues 1-18 (MKRKLFTICLASLQFACA). Positions 27–315 (YEWDIYPVPA…WIRVYTLVPE (289 aa)) constitute a GH16 domain. Residues tryptophan 78, 87–97 (QRDHVSVSDGF), and 101–103 (RAS) contribute to the substrate site. Glutamate 167 acts as the Nucleophile in catalysis. Glutamate 172 (proton donor) is an active-site residue. Arginine 197 is a binding site for substrate.

Belongs to the glycosyl hydrolase 16 family.

The catalysed reaction is Hydrolysis of (1-&gt;4)-beta-D-galactosidic linkages in agarose, giving the tetramer as the predominant product.. Functionally, cleaves the beta-1,4-linkages between beta-D-galactose and alpha-L-3,6-anhydro-galactose residues in agarose. Cleaves agarose in a random manner with retention of the anomeric-bond configuration, producing beta-anomers that give rise progressively to alpha-anomers when mutarotation takes place. The sequence is that of Beta-agarase from Phocaeicola plebeius (strain DSM 17135 / JCM 12973 / CCUG 54634 / M2) (Bacteroides plebeius).